Consider the following 274-residue polypeptide: Large ribosomal subunit protein uL2 (274 aa).

The disordered stretch occupies residues 224–274 (VMNPVDHPHGGGEGRSPIGRNPVTPWGKPALGARTRKKKPGDRLIVKRRAR). Residues 257–274 (RTRKKKPGDRLIVKRRAR) show a composition bias toward basic residues.

This sequence belongs to the universal ribosomal protein uL2 family. In terms of assembly, part of the 50S ribosomal subunit. Forms a bridge to the 30S subunit in the 70S ribosome.

In terms of biological role, one of the primary rRNA binding proteins. Required for association of the 30S and 50S subunits to form the 70S ribosome, for tRNA binding and peptide bond formation. It has been suggested to have peptidyltransferase activity; this is somewhat controversial. Makes several contacts with the 16S rRNA in the 70S ribosome. The chain is Large ribosomal subunit protein uL2 from Pelotomaculum thermopropionicum (strain DSM 13744 / JCM 10971 / SI).